The following is a 427-amino-acid chain: MAKTIQAIRGMNDCLPEISGTWQKVESVLRQVVASYGYQEIRTPIVESTDLFKRSIGEVTDIVEKEMYTFEDRNGDSLTLRPEGTASCVRAGNEHGLLYNQQQRLWYMGPMFRHERPQKGRYRQFHQFGVETYGMDGPDIDLEVILLSARFWKSFGIEQHVKLQINTLGSNEARAAYRDTLVAFLKERADQLDEDSLRRLETNPLRVLDSKNPDVQAAIADAPALIDHLDDESKAHFDTLCARLTQAGIEFEINPRLVRGLDYYNRTVFEWVTDSLGAQGTVCAGGRYDGLVEQLGGKATPAVGFAMGIERLVLLLTTLTEEGQDTSFADVYVTAMGDDAQPYAIEVSEALRNALPNIRIMMHCGGGNFKKQLKRADKTGARLALLLGSDEMQSREVGVKPLRDGQEQVTVSFDTLADKVAEMLSAK.

This sequence belongs to the class-II aminoacyl-tRNA synthetase family. In terms of assembly, homodimer.

Its subcellular location is the cytoplasm. The enzyme catalyses tRNA(His) + L-histidine + ATP = L-histidyl-tRNA(His) + AMP + diphosphate + H(+). This chain is Histidine--tRNA ligase, found in Alteromonas mediterranea (strain DSM 17117 / CIP 110805 / LMG 28347 / Deep ecotype).